The following is a 183-amino-acid chain: uncharacterized protein (183 aa).

4 helical membrane-spanning segments follow: residues 37–59, 79–98, 110–132, and 142–161; these read LFGY…PRQF, AILL…VTSV, WRTF…VLVL, and AFYA…TYVF.

The protein localises to the cell membrane. This is an uncharacterized protein from Archaeoglobus fulgidus (strain ATCC 49558 / DSM 4304 / JCM 9628 / NBRC 100126 / VC-16).